Consider the following 176-residue polypeptide: Small ribosomal subunit protein uS5 (176 aa).

Positions 11 to 74 (LSEVLVDVNR…QAAKKRMMKV (64 aa)) constitute an S5 DRBM domain.

This sequence belongs to the universal ribosomal protein uS5 family. Part of the 30S ribosomal subunit. Contacts proteins S4 and S8.

With S4 and S12 plays an important role in translational accuracy. In terms of biological role, located at the back of the 30S subunit body where it stabilizes the conformation of the head with respect to the body. The protein is Small ribosomal subunit protein uS5 of Rickettsia massiliae (strain Mtu5).